Reading from the N-terminus, the 75-residue chain is Exodeoxyribonuclease 7 small subunit (75 aa).

It belongs to the XseB family. In terms of assembly, heterooligomer composed of large and small subunits.

It is found in the cytoplasm. It catalyses the reaction Exonucleolytic cleavage in either 5'- to 3'- or 3'- to 5'-direction to yield nucleoside 5'-phosphates.. Functionally, bidirectionally degrades single-stranded DNA into large acid-insoluble oligonucleotides, which are then degraded further into small acid-soluble oligonucleotides. This is Exodeoxyribonuclease 7 small subunit from Listeria welshimeri serovar 6b (strain ATCC 35897 / DSM 20650 / CCUG 15529 / CIP 8149 / NCTC 11857 / SLCC 5334 / V8).